The sequence spans 129 residues: uncharacterized protein (129 aa).

The VOC domain occupies 6–129 (QVHHIAIIAT…DGLPLELYEQ (124 aa)). 4 residues coordinate a divalent metal cation: His9, Glu57, His78, and Glu125.

It to B.subtilis YwkD.

This is an uncharacterized protein from Escherichia coli (strain K12).